Reading from the N-terminus, the 126-residue chain is Ribosome-binding factor A (126 aa).

Belongs to the RbfA family. In terms of assembly, monomer. Binds 30S ribosomal subunits, but not 50S ribosomal subunits or 70S ribosomes.

It localises to the cytoplasm. Its function is as follows. One of several proteins that assist in the late maturation steps of the functional core of the 30S ribosomal subunit. Associates with free 30S ribosomal subunits (but not with 30S subunits that are part of 70S ribosomes or polysomes). Required for efficient processing of 16S rRNA. May interact with the 5'-terminal helix region of 16S rRNA. In Thermosynechococcus vestitus (strain NIES-2133 / IAM M-273 / BP-1), this protein is Ribosome-binding factor A.